Here is an 85-residue protein sequence, read N- to C-terminus: Thioredoxin (85 aa).

The 85-residue stretch at 1–85 (MSKVKIELFT…ALVEAIKKRL (85 aa)) folds into the Glutaredoxin domain. A disulfide bridge connects residues Cys-14 and Cys-17.

This sequence belongs to the glutaredoxin family.

It localises to the cytoplasm. In terms of biological role, acts to maintain redox homeostasis; functions as a protein disulfide reductase. This is Thioredoxin (trx) from Methanocaldococcus jannaschii (strain ATCC 43067 / DSM 2661 / JAL-1 / JCM 10045 / NBRC 100440) (Methanococcus jannaschii).